Consider the following 163-residue polypeptide: Crossover junction endodeoxyribonuclease RuvC (163 aa).

Active-site residues include D9, E76, and D148. Mg(2+) is bound by residues D9, E76, and D148.

Belongs to the RuvC family. In terms of assembly, homodimer which binds Holliday junction (HJ) DNA. The HJ becomes 2-fold symmetrical on binding to RuvC with unstacked arms; it has a different conformation from HJ DNA in complex with RuvA. In the full resolvosome a probable DNA-RuvA(4)-RuvB(12)-RuvC(2) complex forms which resolves the HJ. Mg(2+) serves as cofactor.

It localises to the cytoplasm. The enzyme catalyses Endonucleolytic cleavage at a junction such as a reciprocal single-stranded crossover between two homologous DNA duplexes (Holliday junction).. In terms of biological role, the RuvA-RuvB-RuvC complex processes Holliday junction (HJ) DNA during genetic recombination and DNA repair. Endonuclease that resolves HJ intermediates. Cleaves cruciform DNA by making single-stranded nicks across the HJ at symmetrical positions within the homologous arms, yielding a 5'-phosphate and a 3'-hydroxyl group; requires a central core of homology in the junction. The consensus cleavage sequence is 5'-(A/T)TT(C/G)-3'. Cleavage occurs on the 3'-side of the TT dinucleotide at the point of strand exchange. HJ branch migration catalyzed by RuvA-RuvB allows RuvC to scan DNA until it finds its consensus sequence, where it cleaves and resolves the cruciform DNA. This Trichodesmium erythraeum (strain IMS101) protein is Crossover junction endodeoxyribonuclease RuvC.